Reading from the N-terminus, the 913-residue chain is Rab GTPase-activating protein tbc-8 (913 aa).

Residues 1–24 (MQMFRHSSADMWRAKKPTLERRST) form a disordered region. Residues 106–240 (NLNSPYVTSL…TYRRMSNRIE (135 aa)) form the RUN domain. One can recognise a Rab-GAP TBC domain in the interval 597-844 (INTKEVRRMA…KVWEVIWAAQ (248 aa)).

Belongs to the RUTBC family. In terms of assembly, interacts with rab-19. Interacts with ric-19; the interaction is direct and may be required for the activation of rab-2 and dense vesicle maturation in cholinergic motoneurons. Interacts (via RUN domain) with rund-1. Does not interact with unc-108 (GTP-bound form). In terms of tissue distribution, expressed in neurons in the head, tail and ventral nerve cord (at protein level).

Its subcellular location is the golgi apparatus. The protein localises to the trans-Golgi network. The protein resides in the early endosome. It localises to the cytoplasmic vesicle membrane. In terms of biological role, interacts with numerous Rab family members, functioning as Rab effector for some, and as GTPase activator for others. GTPase activator for rab-2. In association with ric-19 activates rab-2 during dense core vesicle maturation in cholinergic motoneurons. The chain is Rab GTPase-activating protein tbc-8 from Caenorhabditis elegans.